We begin with the raw amino-acid sequence, 2037 residues long: Fatty acid synthase subunit beta (2037 aa).

Residues 1 to 453 (MSTHRPFQLT…VYDTFDGSDF (453 aa)) are acetyltransferase. S261 (for acetyltransferase activity) is an active-site residue. Residues 465–798 (VKLITELPVH…GSRVMTSKES (334 aa)) are enoyl reductase. Positions 1132–1612 (GTELNWLQAF…LPNDTLQTTM (481 aa)) are dehydratase. The MaoC-like domain maps to 1506-1634 (NGKTIEESVI…KVETRNVETE (129 aa)). The segment at 1613 to 1833 (EHVGMINGRK…MTMQVAVPRD (221 aa)) is malonyl/palmitoyl transferase. S1796 (for malonyltransferase activity) is an active-site residue.

Belongs to the fungal fatty acid synthetase subunit beta family. [Alpha(6)beta(6)] hexamers of two multifunctional subunits (alpha and beta).

The catalysed reaction is acetyl-CoA + n malonyl-CoA + 2n NADPH + 4n H(+) = a long-chain-acyl-CoA + n CoA + n CO2 + 2n NADP(+).. It carries out the reaction holo-[ACP] + acetyl-CoA = acetyl-[ACP] + CoA. It catalyses the reaction holo-[ACP] + malonyl-CoA = malonyl-[ACP] + CoA. The enzyme catalyses a (3R)-hydroxyacyl-[ACP] = a (2E)-enoyl-[ACP] + H2O. The catalysed reaction is a 2,3-saturated acyl-[ACP] + NAD(+) = a (2E)-enoyl-[ACP] + NADH + H(+). It carries out the reaction (9Z)-octadecenoyl-[ACP] + H2O = (9Z)-octadecenoate + holo-[ACP] + H(+). In terms of biological role, fatty acid synthetase catalyzes the formation of long-chain fatty acids from acetyl-CoA, malonyl-CoA and NADPH. The beta subunit contains domains for: [acyl-carrier-protein] acetyltransferase and malonyltransferase, S-acyl fatty acid synthase thioesterase, enoyl-[acyl-carrier-protein] reductase, and 3-hydroxypalmitoyl-[acyl-carrier-protein] dehydratase. In Candida albicans (Yeast), this protein is Fatty acid synthase subunit beta (FAS1).